We begin with the raw amino-acid sequence, 360 residues long: Histidinol-phosphate aminotransferase (360 aa).

Position 218 is an N6-(pyridoxal phosphate)lysine (Lys218).

It belongs to the class-II pyridoxal-phosphate-dependent aminotransferase family. Histidinol-phosphate aminotransferase subfamily. In terms of assembly, homodimer. The cofactor is pyridoxal 5'-phosphate.

It catalyses the reaction L-histidinol phosphate + 2-oxoglutarate = 3-(imidazol-4-yl)-2-oxopropyl phosphate + L-glutamate. Its pathway is amino-acid biosynthesis; L-histidine biosynthesis; L-histidine from 5-phospho-alpha-D-ribose 1-diphosphate: step 7/9. The chain is Histidinol-phosphate aminotransferase from Chlorobium phaeobacteroides (strain DSM 266 / SMG 266 / 2430).